The primary structure comprises 337 residues: Ral GTPase-activating protein subunit alpha-1 (337 aa).

Component of the heterodimeric RalGAP1 complex with RALGAPB. Heterodimerization is required for activity. Interacts with the HLH region of TCF3/isoform E12.

It is found in the cytoplasm. The protein resides in the nucleus. Catalytic subunit of the heterodimeric RalGAP1 complex which acts as a GTPase activator for the Ras-like small GTPases RALA and RALB. This Sus scrofa (Pig) protein is Ral GTPase-activating protein subunit alpha-1.